Consider the following 235-residue polypeptide: Sugar fermentation stimulation protein homolog (235 aa).

The protein belongs to the SfsA family.

The sequence is that of Sugar fermentation stimulation protein homolog from Pseudomonas paraeruginosa (strain DSM 24068 / PA7) (Pseudomonas aeruginosa (strain PA7)).